Consider the following 370-residue polypeptide: Platelet-derived growth factor D (370 aa).

The N-terminal stretch at 1–18 is a signal peptide; the sequence is MHRLIFVYTLICANFCSC. The CUB domain occupies 52-170; sequence RDETIQVKGN…PGFKIYYSLL (119 aa). A disulfide bridge links cysteine 109 with cysteine 131. N-linked (GlcNAc...) asparagine glycosylation occurs at asparagine 276. Disulfide bonds link cysteine 302–cysteine 360 and cysteine 306–cysteine 362.

The protein belongs to the PDGF/VEGF growth factor family. In terms of assembly, homodimer; disulfide-linked. Interacts with PDGFRB homodimers, and with heterodimers formed by PDGFRA and PDGFRB. In terms of processing, activated by proteolytic cleavage. Proteolytic removal of the N-terminal CUB domain releasing the core domain is necessary for unmasking the receptor-binding epitopes of the core domain. Cleavage after Arg-247 or Arg-249 by urokinase plasminogen activator gives rise to the active form. In terms of tissue distribution, expressed at high levels in the heart, pancreas, adrenal gland and ovary and at low levels in placenta, liver, kidney, prostate, testis, small intestine, spleen and colon. In the kidney, expressed by the visceral epithelial cells of the glomeruli. A widespread expression is also seen in the medial smooth muscle cells of arteries and arterioles, as well as in smooth muscle cells of vasa rectae in the medullary area. Expressed in the adventitial connective tissue surrounding the suprarenal artery. In chronic obstructive nephropathy, a persistent expression is seen in glomerular visceral epithelial cells and vascular smooth muscle cells, as well as de novo expression by periglomerular interstitial cells and by some neointimal cells of atherosclerotic vessels. Expression in normal prostate is seen preferentially in the mesenchyme of the gland while expression is increased and more profuse in prostate carcinoma. Expressed in many ovarian, lung, renal and brain cancer-derived cell lines.

The protein localises to the secreted. Its function is as follows. Growth factor that plays an essential role in the regulation of embryonic development, cell proliferation, cell migration, survival and chemotaxis. Potent mitogen for cells of mesenchymal origin. Plays an important role in wound healing. Induces macrophage recruitment, increased interstitial pressure, and blood vessel maturation during angiogenesis. Can initiate events that lead to a mesangial proliferative glomerulonephritis, including influx of monocytes and macrophages and production of extracellular matrix. The chain is Platelet-derived growth factor D (PDGFD) from Homo sapiens (Human).